The following is a 479-amino-acid chain: Cardiolipin synthase A (479 aa).

2 helical membrane-spanning segments follow: residues 8-28 (FFGYLIGLIHLLGIIAALHAV) and 38-58 (IAWALSLLFIPYFTLIPYLIF). 2 PLD phosphodiesterase domains span residues 218 to 245 (VNFRNHRKIVVVDGLRGFLGGHNVGDEY) and 392 to 419 (QPGFLHQKVVLVDDEVSAIGSANLDNRS). Active-site residues include H223, K225, D230, H397, K399, and D404.

The protein belongs to the phospholipase D family. Cardiolipin synthase subfamily. ClsA sub-subfamily.

The protein localises to the cell inner membrane. The enzyme catalyses 2 a 1,2-diacyl-sn-glycero-3-phospho-(1'-sn-glycerol) = a cardiolipin + glycerol. Catalyzes the reversible phosphatidyl group transfer from one phosphatidylglycerol molecule to another to form cardiolipin (CL) (diphosphatidylglycerol) and glycerol. The protein is Cardiolipin synthase A of Pseudomonas entomophila (strain L48).